Here is a 197-residue protein sequence, read N- to C-terminus: Recombination protein RecR (197 aa).

A C4-type zinc finger spans residues Cys56–Cys71. Residues Thr79–Pro174 enclose the Toprim domain.

This sequence belongs to the RecR family.

Its function is as follows. May play a role in DNA repair. It seems to be involved in an RecBC-independent recombinational process of DNA repair. It may act with RecF and RecO. The protein is Recombination protein RecR of Psychrobacter cryohalolentis (strain ATCC BAA-1226 / DSM 17306 / VKM B-2378 / K5).